Consider the following 115-residue polypeptide: DNA-binding protein Ta0052 (115 aa).

Positions Met1–Arg41 are disordered. Over residues Leu15–Glu25 the composition is skewed to low complexity. Positions Gln26–Arg41 are enriched in basic and acidic residues.

It belongs to the PDCD5 family.

In Thermoplasma acidophilum (strain ATCC 25905 / DSM 1728 / JCM 9062 / NBRC 15155 / AMRC-C165), this protein is DNA-binding protein Ta0052.